A 720-amino-acid chain; its full sequence is F-box/LRR-repeat MAX2 homolog (720 aa).

The region spanning 14-60 (SSAILDLPEPLLLHILSFLTDVRSRHRAALACGRMRAAERATRSELS) is the F-box domain. LRR repeat units follow at residues 71-134 (LFLS…QNAF), 135-158 (IAARLAGCFPAVTSLAVYCRDPTT), 159-189 (LANLTPHWQASLRRVKLVRWHQRPPTLPDGA), 190-218 (DLEPLLETCAALRELDLSEFYCWTEDVVR), 219-247 (ALTTHPSATAALTHLDLGLAAATDGFKSS), 248-279 (ELGPIAASCPNLRKLVAPCLFNPRFSDCVGDD), 280-316 (ALLSLATSCPRLTVLRLSEPFEAAANIQREEAAITVA), 317-344 (GLVAFFAALPALEDFTMDLQHNVLEAAP), 345-372 (AMEALARRCPRIKFLTLGSFQGLCKASW), 373-398 (LHLDGVAVCGGLESLYMKNCQDLTDA), 399-435 (SLAAIGRGCRRLAKFGIHGCDLVTSAGIRRLAFTLRP), 436-452 (TLKEVTVLHCRLLHTAE), 453-510 (CLTA…KCRY), 511-537 (MEFDDLGSWEMLRSLSLWFSAGQLLSP), 538-571 (LISAGLDSCPVLEEISIKVEGDCRTCPRPAPRTI), 572-606 (FGLSDLAGFPVLAKMKLDLSEAVGYALTAPTGQMD), 607-644 (LSLWERFYLHGIESLQTLYELDYWPPQDKDVHHRSLTL), and 645-720 (PAVG…QIDD).

Associates to a SCF (SKP1-CUL1-F-box protein) E3 ubiquitin-protein ligase complex. Interacts with D14 in a strigolactone-dependent manner. Interacts with SKP1, SKP5 and SKP20. In terms of tissue distribution, expressed in leaves. Expressed in roots, culms, leaf blades, leaf sheaths, shoot bases and panicles.

Its subcellular location is the nucleus. In terms of biological role, involved in strigolactone (SL) signaling. Required for responses to SLs and the establishment of arbuscular mycorrhiza symbiosis in rice. Strigolactone-dependent association of D3 with D14 and D53 (a repressor of SL signaling) triggers D53 ubiquitination and degradation. Controls tillering by suppressing axillary bud activity. Tiller is a specialized grain-bearing branch that is formed on the unelongated basal internode and grows independently of the mother stem (culm) by means of its own adventitious roots. This is F-box/LRR-repeat MAX2 homolog from Oryza sativa subsp. japonica (Rice).